The sequence spans 456 residues: Exodeoxyribonuclease 7 large subunit (456 aa).

Belongs to the XseA family. In terms of assembly, heterooligomer composed of large and small subunits.

The protein localises to the cytoplasm. The enzyme catalyses Exonucleolytic cleavage in either 5'- to 3'- or 3'- to 5'-direction to yield nucleoside 5'-phosphates.. In terms of biological role, bidirectionally degrades single-stranded DNA into large acid-insoluble oligonucleotides, which are then degraded further into small acid-soluble oligonucleotides. The chain is Exodeoxyribonuclease 7 large subunit from Shigella boydii serotype 18 (strain CDC 3083-94 / BS512).